The following is a 260-amino-acid chain: Dehydrogenase/reductase SDR family member 11 (260 aa).

Residues M1 to A30 form the signal peptide. Residues G18–I23, R43–T44, E49, D70–L71, and N97 contribute to the NADP(+) site. Substrate is bound by residues S151 and Y166. Residues Y166, K170, V201 to Q204, and K208 each bind NADP(+). The active-site Proton acceptor is Y166.

This sequence belongs to the short-chain dehydrogenases/reductases (SDR) family. Homotetramer.

Its subcellular location is the secreted. It catalyses the reaction a 3beta-hydroxysteroid + NADP(+) = a 3-oxosteroid + NADPH + H(+). The catalysed reaction is 17beta-estradiol + NAD(+) = estrone + NADH + H(+). The enzyme catalyses 17beta-estradiol + NADP(+) = estrone + NADPH + H(+). Its pathway is steroid biosynthesis; estrogen biosynthesis. With respect to regulation, inhibited by flavonoids including apigenin, luteolin, genistein, kaempferol and quercetin and also by carbenoxolone, zearalenone, glycyrrhetinic, curcumin and flufenamic acid. Catalyzes the conversion of the 17-keto group of estrone, 4- and 5-androstenes and 5-alpha-androstanes into their 17-beta-hydroxyl metabolites and the conversion of the 3-keto group of 3-, 3,17- and 3,20- diketosteroids into their 3-hydroxyl metabolites. Exhibits reductive 3-beta-hydroxysteroid dehydrogenase activity toward 5-beta-androstanes, 5-beta-pregnanes, 4-pregnenes and bile acids. May also reduce endogenous and exogenous alpha-dicarbonyl compounds and xenobiotic alicyclic ketones. This is Dehydrogenase/reductase SDR family member 11 (Dhrs11) from Mus musculus (Mouse).